Here is a 188-residue protein sequence, read N- to C-terminus: Inner membrane-spanning protein YciB (188 aa).

5 consecutive transmembrane segments (helical) span residues 22–42 (IYIASGALIAATALSLAVTWM), 50–70 (MTLVTFAMVVVFGSLTLVFHN), 72–92 (LFIKWKVTIIYALFAVALLVS), 121–141 (FAWAMFFLVCGLVNIYIAFWL), and 149–169 (FKVFGLTGVTLLFTLICGVYI).

It belongs to the YciB family.

The protein localises to the cell inner membrane. In terms of biological role, plays a role in cell envelope biogenesis, maintenance of cell envelope integrity and membrane homeostasis. This is Inner membrane-spanning protein YciB from Pectobacterium carotovorum subsp. carotovorum (strain PC1).